A 281-amino-acid polypeptide reads, in one-letter code: sn-glycerol-3-phosphate transport system permease protein UgpE (281 aa).

Transmembrane regions (helical) follow at residues 16 to 36 (LILG…AATL), 85 to 105 (FSIT…IVWF), 113 to 133 (FFWM…FPTV), 142 to 162 (LDSY…TFLF), 202 to 222 (ALFV…LLII), and 247 to 267 (WNSV…IVLV). The ABC transmembrane type-1 domain occupies 77–268 (LLNSFVMAFS…IPPVVIVLVM (192 aa)).

Belongs to the binding-protein-dependent transport system permease family. UgpAE subfamily. The complex is composed of two ATP-binding proteins (UgpC), two transmembrane proteins (UgpA and UgpE) and a solute-binding protein (UgpB).

It is found in the cell inner membrane. Part of the ABC transporter complex UgpBAEC involved in sn-glycerol-3-phosphate (G3P) import. Probably responsible for the translocation of the substrate across the membrane. Can also transport glycerophosphoryl diesters, which are hydrolyzed to G3P and alcohol during transport. The G3P moiety can be detected in the cytoplasm whereas the corresponding alcohol is usually found in the culture medium. It was proposed by Yang et al that the complex could also transport glycerol-2-phosphate (G2P) in vivo, but it was shown later by Wuttge et al that UgpB does not bind G2P, questioning this transport activity. G2P might be converted in the periplasm to G3P before its transport. In Escherichia coli (strain K12), this protein is sn-glycerol-3-phosphate transport system permease protein UgpE.